The primary structure comprises 225 residues: uncharacterized protein (225 aa).

Residues 32–82 (PKDKKKQNDTENKKKQPKDGENDKQKEQAETQPFEWIQQKDADDKKESNTA) are disordered. 2 stretches are compositionally biased toward basic and acidic residues: residues 37-60 (KQND…KEQA) and 69-79 (QQKDADDKKES).

It belongs to the MG067/MG068/MG395 family.

This is an uncharacterized protein from Mycoplasma pneumoniae (strain ATCC 29342 / M129 / Subtype 1) (Mycoplasmoides pneumoniae).